A 386-amino-acid polypeptide reads, in one-letter code: Probable Xaa-Pro aminopeptidase PMAA_074180 (386 aa).

Positions 160, 171, 311, and 350 each coordinate Mn(2+).

Belongs to the peptidase M24B family. Mn(2+) is required as a cofactor.

It catalyses the reaction Release of any N-terminal amino acid, including proline, that is linked to proline, even from a dipeptide or tripeptide.. Functionally, catalyzes the removal of a penultimate prolyl residue from the N-termini of peptides. This is Probable Xaa-Pro aminopeptidase PMAA_074180 from Talaromyces marneffei (strain ATCC 18224 / CBS 334.59 / QM 7333) (Penicillium marneffei).